The primary structure comprises 601 residues: Elongation factor 4 (601 aa).

The tr-type G domain maps to 6–188 (KFTRNFSIIA…AICYLLPPPV (183 aa)). Residues 18–23 (DHGKST) and 135–138 (NKID) each bind GTP.

Belongs to the TRAFAC class translation factor GTPase superfamily. Classic translation factor GTPase family. LepA subfamily.

It localises to the cell inner membrane. The catalysed reaction is GTP + H2O = GDP + phosphate + H(+). In terms of biological role, required for accurate and efficient protein synthesis under certain stress conditions. May act as a fidelity factor of the translation reaction, by catalyzing a one-codon backward translocation of tRNAs on improperly translocated ribosomes. Back-translocation proceeds from a post-translocation (POST) complex to a pre-translocation (PRE) complex, thus giving elongation factor G a second chance to translocate the tRNAs correctly. Binds to ribosomes in a GTP-dependent manner. This Leptospira biflexa serovar Patoc (strain Patoc 1 / Ames) protein is Elongation factor 4.